The chain runs to 171 residues: Putative auxin-responsive protein IAA29 (171 aa).

The PB1 domain occupies 19 to 114; sequence SRFVKVFMHG…TVKKIYIVPA (96 aa). The segment at 117 to 171 is disordered; the sequence is QNENDYQEEEEDNAAAAATADEDGDGAAADDGVAAAADDVDDVAGYTSNDDPSFD. The segment covering 142-153 has biased composition (low complexity); sequence GAAADDGVAAAA. Polar residues predominate over residues 162–171; sequence YTSNDDPSFD.

The protein belongs to the Aux/IAA family. Homodimers and heterodimers.

The protein resides in the nucleus. Its function is as follows. Aux/IAA proteins are short-lived transcriptional factors that function as repressors of early auxin response genes at low auxin concentrations. This is Putative auxin-responsive protein IAA29 (IAA29) from Oryza sativa subsp. japonica (Rice).